The following is a 259-amino-acid chain: Transcription factor bHLH80 (259 aa).

A disordered region spans residues 1 to 25; that stretch reads MQSTHISGGSSGGGGGGGGEVSRSG. The span at 9–20 shows a compositional bias: gly residues; sequence GSSGGGGGGGGE. Residues 187-237 enclose the bHLH domain; sequence CATHPRSIAERVRRTRISDRIRRLQELVPNMDKQTNTADMLEEAVEYVKAL.

In terms of assembly, homodimer. Expressed constitutively in roots, leaves, stems, and flowers.

It is found in the nucleus. This is Transcription factor bHLH80 (BHLH80) from Arabidopsis thaliana (Mouse-ear cress).